The following is a 372-amino-acid chain: DNA double-strand break repair protein Mre11 (372 aa).

Residues D8, H10, D49, and N84 each coordinate Mn(2+). H85 functions as the Proton donor in the catalytic mechanism. Positions 161, 190, and 192 each coordinate Mn(2+).

It belongs to the MRE11/RAD32 family. In terms of assembly, homodimer. Forms a heterotetramer composed of two Mre11 subunits and two Rad50 subunits. Mn(2+) is required as a cofactor.

Its activity is regulated as follows. Nuclease activity is regulated by Rad50. Its function is as follows. Part of the Rad50/Mre11 complex, which is involved in the early steps of DNA double-strand break (DSB) repair. The complex may facilitate opening of the processed DNA ends to aid in the recruitment of HerA and NurA. Mre11 binds to DSB ends and has both double-stranded 3'-5' exonuclease activity and single-stranded endonuclease activity. The polypeptide is DNA double-strand break repair protein Mre11 (Methanococcus maripaludis (strain DSM 14266 / JCM 13030 / NBRC 101832 / S2 / LL)).